We begin with the raw amino-acid sequence, 41 residues long: U15-myrmicitoxin-Tb1b (41 aa).

An N-terminal signal peptide occupies residues 1–25 (MKIVKLITIFAMIATLMVTVTNGEA). Histidine 40 bears the Histidine amide mark.

As to expression, expressed by the venom gland.

It is found in the secreted. In terms of biological role, venom protein with unknown function. Does not induce paralysis when a high dose is administered by intrathoracic injection into the blowfly Lucilia caesar. The polypeptide is U15-myrmicitoxin-Tb1b (Tetramorium bicarinatum (Tramp ant)).